The chain runs to 558 residues: C4b-binding protein alpha chain (558 aa).

Positions 1-13 are cleaved as a signal peptide; that stretch reads MSLTAALWVAVFG. Sushi domains follow at residues 14–74, 75–136, 137–201, 202–260, 261–326, 327–388, 389–445, and 446–503; these read KCGP…ACVK, KSCR…ECVI, AKCG…TCER, IICP…VCEL, NSCT…GCKE, ICCP…SCHQ, SCDF…QCKA, and LCRK…RCEQ. 16 cysteine pairs are disulfide-bonded: C15/C60, C45/C72, C77/C118, C104/C134, C139/C182, C168/C199, C204/C246, C232/C258, C263/C312, C296/C324, C329/C373, C363/C386, C390/C431, C417/C443, C447/C488, and C474/C501. An N-linked (GlcNAc...) asparagine glycan is attached at N31. N177 and N186 each carry an N-linked (GlcNAc...) asparagine glycan. 2 N-linked (GlcNAc...) asparagine glycosylation sites follow: N469 and N491.

Disulfide-linked complex of alpha and beta chains.

It localises to the secreted. In terms of biological role, controls the classical pathway of complement activation. It binds as a cofactor to C3b/C4b inactivator (C3bINA), which then hydrolyzes the complement fragment C4b. It also accelerates the degradation of the C4bC2a complex (C3 convertase) by dissociating the complement fragment C2a. Alpha chain binds C4b. It also interacts with anticoagulant protein S and with serum amyloid P component. In Rattus norvegicus (Rat), this protein is C4b-binding protein alpha chain (C4bpa).